Reading from the N-terminus, the 224-residue chain is uncharacterized protein (224 aa).

The first 16 residues, 1-16 (MKILYSFLLLPFFSCA), serve as a signal peptide directing secretion.

This is an uncharacterized protein from Escherichia coli.